Here is a 233-residue protein sequence, read N- to C-terminus: UPF0725 protein At4g17990 (233 aa).

Belongs to the UPF0725 (EMB2204) family.

This Arabidopsis thaliana (Mouse-ear cress) protein is UPF0725 protein At4g17990.